We begin with the raw amino-acid sequence, 430 residues long: PCI domain-containing protein 2 homolog (430 aa).

In terms of domain architecture, PCI spans 243 to 424; sequence ITYRFFNGRL…ALVVSPTNPF (182 aa).

This sequence belongs to the CSN12 family.

This chain is PCI domain-containing protein 2 homolog (pcid2), found in Dictyostelium discoideum (Social amoeba).